We begin with the raw amino-acid sequence, 291 residues long: Polyamine aminopropyltransferase (291 aa).

A PABS domain is found at 5–245 (PGPIVLMEPL…YAVNFVLGSL (241 aa)). Glutamine 36 contacts S-methyl-5'-thioadenosine. Spermidine-binding residues include histidine 67 and glutamate 91. Residues aspartate 111 and 143-144 (DG) contribute to the S-methyl-5'-thioadenosine site. Aspartate 164 acts as the Proton acceptor in catalysis.

The protein belongs to the spermidine/spermine synthase family. In terms of assembly, homodimer or homotetramer.

It is found in the cytoplasm. The enzyme catalyses norspermidine + S-adenosyl 3-(methylsulfanyl)propylamine = norspermine + S-methyl-5'-thioadenosine + H(+). It carries out the reaction S-adenosyl 3-(methylsulfanyl)propylamine + spermidine = thermospermine + S-methyl-5'-thioadenosine + H(+). Functionally, involved in the biosynthesis of polyamines which are thought to support the growth of thermophilic microorganisms under high-temperature conditions. It seems that long-chain and branched-chain of polyamines effectively stabilize DNA and RNA, respectively. Catalyzes the irreversible transfer of a propylamine group from the amino donor S-adenosylmethioninamine (decarboxy-AdoMet) to norspermidine and 1,3-diaminopropane to yield norspermine, and to spermidine to yield thermospermine. It can also synthesize thermospermine from putrescine (1,4-diaminobutane) and caldopentamine from norspermine with a very low activity. The biosynthesis of caldohexamine and caldoheptamine from caldopentamine has been also observed. This is Polyamine aminopropyltransferase from Pyrobaculum aerophilum (strain ATCC 51768 / DSM 7523 / JCM 9630 / CIP 104966 / NBRC 100827 / IM2).